We begin with the raw amino-acid sequence, 1007 residues long: Rho-type GTPase-activating protein 1 (1007 aa).

LIM zinc-binding domains lie at 13–66 (CVRC…CFDC) and 70–122 (CKNC…CLSC). 3 disordered regions span residues 203–293 (ITGY…KSPS), 401–478 (EKYS…STSL), and 505–600 (KETA…NDPS). Positions 212–221 (NSGSSKFGSN) are enriched in low complexity. Polar residues-rich tracts occupy residues 250-261 (ANMSLNVATDPT) and 270-293 (HSRN…KSPS). A Phosphothreonine modification is found at Thr-278. Ser-291 is subject to Phosphoserine. Residues 411 to 421 (KGRKISRSLSR) show a composition bias toward basic residues. Over residues 454–466 (RSQDLMRDNDSHT) the composition is skewed to basic and acidic residues. Polar residues-rich tracts occupy residues 467–478 (GLDTPNSNSTSL) and 529–579 (SPAT…LENS). Thr-532 is subject to Phosphothreonine. The segment covering 583–600 (EEQKETLYENSESRNDPS) has biased composition (basic and acidic residues). The region spanning 791 to 1006 (SSLVARCNYE…FIFGNYKDIL (216 aa)) is the Rho-GAP domain.

GTPase-activating protein (GAP) for CDC42 and/or RHO1. Negative regulator of the pheromone-response pathway through the STE20 protein kinase; acts at a step between the G-protein and the MAP kinase module. Dominant suppressor of bud emergence defect caused by deletion of IPL2/BEM2. Involved in the control of polarized cell growth and proper bud site selection. This is Rho-type GTPase-activating protein 1 (RGA1) from Saccharomyces cerevisiae (strain ATCC 204508 / S288c) (Baker's yeast).